The chain runs to 126 residues: MHLSQLIACALLLALLSLRPSEAKPGTPPKVPRTPPGEELADSQAAGGNQKKGDKTPGSGGANLKGDRSRLLRDLRVDTKSRAAWARLLHEHPNARKYKGGNKKGLSKGCFGLKLDRIGSMSGLGC.

Residues 1–23 form the signal peptide; it reads MHLSQLIACALLLALLSLRPSEA. The tract at residues 20–73 is disordered; it reads PSEAKPGTPPKVPRTPPGEELADSQAAGGNQKKGDKTPGSGGANLKGDRSRLLR. A propeptide spanning residues 24-73 is cleaved from the precursor; the sequence is KPGTPPKVPRTPPGEELADSQAAGGNQKKGDKTPGSGGANLKGDRSRLLR. Positions 26–35 are enriched in pro residues; it reads GTPPKVPRTP. Cysteines 110 and 126 form a disulfide.

This sequence belongs to the natriuretic peptide family. In terms of processing, degraded by IDE (in vitro).

The protein localises to the secreted. In terms of biological role, hormone which plays a role in endochondral ossification through regulation of cartilaginous growth plate chondrocytes proliferation and differentiation. May also be vasoactive and natriuretic. Acts by specifically binding and stimulating NPR2 to produce cGMP. Binds the clearance receptor NPR3. This is C-type natriuretic peptide (Nppc) from Mus musculus (Mouse).